Reading from the N-terminus, the 229-residue chain is 7-cyano-7-deazaguanine synthase (229 aa).

15–25 serves as a coordination point for ATP; it reads LSGGLDSTTCL. Positions 192, 202, 205, and 208 each coordinate Zn(2+).

This sequence belongs to the QueC family. Requires Zn(2+) as cofactor.

It carries out the reaction 7-carboxy-7-deazaguanine + NH4(+) + ATP = 7-cyano-7-deazaguanine + ADP + phosphate + H2O + H(+). Its pathway is purine metabolism; 7-cyano-7-deazaguanine biosynthesis. Functionally, catalyzes the ATP-dependent conversion of 7-carboxy-7-deazaguanine (CDG) to 7-cyano-7-deazaguanine (preQ(0)). The polypeptide is 7-cyano-7-deazaguanine synthase (Acinetobacter baylyi (strain ATCC 33305 / BD413 / ADP1)).